The primary structure comprises 765 residues: Eukaryotic translation initiation factor 3 subunit B (765 aa).

The sufficient for interaction with HCR1 and TIF32 stretch occupies residues 1-136 (MKNFLPRTLK…LFVECGSMND (136 aa)). Residues 28 to 261 (RNTQLKRSKI…GVTAWGGPNF (234 aa)) are sufficient for interaction with PIC8. Position 61 is a phosphoserine (S61). Y67 bears the Phosphotyrosine mark. Residues 77-162 (QYIVVNGAPV…HRLFLYTMKD (86 aa)) form the RRM domain. S671 is subject to Phosphoserine.

The protein belongs to the eIF-3 subunit B family. In terms of assembly, component of the eukaryotic translation initiation factor 3 (eIF-3) complex.

The protein localises to the cytoplasm. Functionally, RNA-binding component of the eukaryotic translation initiation factor 3 (eIF-3) complex, which is involved in protein synthesis of a specialized repertoire of mRNAs and, together with other initiation factors, stimulates binding of mRNA and methionyl-tRNAi to the 40S ribosome. The eIF-3 complex specifically targets and initiates translation of a subset of mRNAs involved in cell proliferation. The sequence is that of Eukaryotic translation initiation factor 3 subunit B from Saccharomyces cerevisiae (strain YJM789) (Baker's yeast).